The chain runs to 611 residues: Elongation factor 4 (611 aa).

One can recognise a tr-type G domain in the interval 12 to 194 (SRIRNFSIIA…QIVEKVPAPA (183 aa)). GTP-binding positions include 24-29 (DHGKST) and 141-144 (NKID).

The protein belongs to the TRAFAC class translation factor GTPase superfamily. Classic translation factor GTPase family. LepA subfamily.

It localises to the cell membrane. It catalyses the reaction GTP + H2O = GDP + phosphate + H(+). Functionally, required for accurate and efficient protein synthesis under certain stress conditions. May act as a fidelity factor of the translation reaction, by catalyzing a one-codon backward translocation of tRNAs on improperly translocated ribosomes. Back-translocation proceeds from a post-translocation (POST) complex to a pre-translocation (PRE) complex, thus giving elongation factor G a second chance to translocate the tRNAs correctly. Binds to ribosomes in a GTP-dependent manner. This is Elongation factor 4 from Bacillus velezensis (strain DSM 23117 / BGSC 10A6 / LMG 26770 / FZB42) (Bacillus amyloliquefaciens subsp. plantarum).